The following is a 594-amino-acid chain: MGLDYLMVHVKYNLPPALLLTILYKPFFTRLEVHKIVLLCTIAVVWTIPWDSYLIRTRIWSYPADSVLGQTLFQIPLEEVFFFIIQTYNTSLLYIIFNKRLVLPSYLSGPTKPLAQGLFGPITHRTQRDLGTLFFTGILILGISFIYIGGEYMYLGLILSWVSPILVMQWVLMYRFLLALPPASVWVPIALPTLYLWVVDTLALRRGTWVIESGTKVDIQLWEGLEIEEALFFLVTNVMVVFGIAAMHNAAALFEYKAFISTTAMGDTPSIYQLITLFLTSSRLYDTNVLQEMSQAVTLLKQKSQSMYLGSAMFEGQLRLDLIALYSFCRKADDLIDDAPDRETAKYWIEQCEKALELRFKLKETALDDTEAYQLLTKSIPQPLHAAAHLLPASRLPKEPLSCLLQGFEIDLKFDFEKGSFPIATEHDLEVYAYHVAGTVASLLLELVFRHHPVSISEAERLRVISAGEVMGRALQYTNIARDITRDAEIGRVYIPSSWLAEEGLTPSMVISHPRNSKLIPLRRRILEKADKCYCETQEAISKLPSNVQGPVRATVTAYMEIGQVIRENETKIWNGKLKVSRWRRFKRAWLAML.

Positions 1 to 249 are lycopene beta-cyclase; that stretch reads MGLDYLMVHV…VVFGIAAMHN (249 aa). The next 7 helical transmembrane spans lie at 3–23, 35–55, 77–97, 130–150, 153–173, 176–196, and 227–247; these read LDYL…LTIL, KIVL…SYLI, LEEV…YIIF, LGTL…YIGG, MYLG…WVLM, FLLA…TLYL, and IEEA…IAAM. Residues 256 to 594 are phytoene synthase; it reads YKAFISTTAM…RFKRAWLAML (339 aa).

This sequence in the N-terminal section; belongs to the lycopene beta-cyclase family. In the C-terminal section; belongs to the phytoene/squalene synthase family.

The protein localises to the membrane. It carries out the reaction all-trans-lycopene = gamma-carotene. It catalyses the reaction gamma-carotene = all-trans-beta-carotene. The catalysed reaction is 2 (2E,6E,10E)-geranylgeranyl diphosphate = 15-cis-phytoene + 2 diphosphate. It participates in carotenoid biosynthesis; beta-carotene biosynthesis. Its pathway is carotenoid biosynthesis; phytoene biosynthesis; all-trans-phytoene from geranylgeranyl diphosphate: step 1/1. Bifunctional enzyme that catalyzes the reactions from geranylgeranyl diphosphate to phytoene (phytoene synthase) and lycopene to beta-carotene via the intermediate gamma-carotene (lycopene cyclase). The chain is Bifunctional lycopene cyclase/phytoene synthase from Arthroderma gypseum (strain ATCC MYA-4604 / CBS 118893) (Microsporum gypseum).